The primary structure comprises 337 residues: Anthranilate phosphoribosyltransferase (337 aa).

Residues Gly80, 83-84 (GD), Thr88, 90-93 (NIST), 108-116 (KHGNRAVSS), and Ser120 each bind 5-phospho-alpha-D-ribose 1-diphosphate. Position 80 (Gly80) interacts with anthranilate. Ser92 lines the Mg(2+) pocket. Asn111 contacts anthranilate. Anthranilate is bound at residue Arg166. Asp224 and Glu225 together coordinate Mg(2+).

Belongs to the anthranilate phosphoribosyltransferase family. Homodimer. Requires Mg(2+) as cofactor.

It carries out the reaction N-(5-phospho-beta-D-ribosyl)anthranilate + diphosphate = 5-phospho-alpha-D-ribose 1-diphosphate + anthranilate. Its pathway is amino-acid biosynthesis; L-tryptophan biosynthesis; L-tryptophan from chorismate: step 2/5. Functionally, catalyzes the transfer of the phosphoribosyl group of 5-phosphorylribose-1-pyrophosphate (PRPP) to anthranilate to yield N-(5'-phosphoribosyl)-anthranilate (PRA). The protein is Anthranilate phosphoribosyltransferase of Anaeromyxobacter sp. (strain K).